The chain runs to 692 residues: Potassium-transporting ATPase ATP-binding subunit (692 aa).

4 consecutive transmembrane segments (helical) span residues Pro-50–Ser-70, Ser-74–Ala-94, Leu-240–Phe-260, and Val-266–Ile-286. Catalysis depends on Asp-319, which acts as the 4-aspartylphosphate intermediate. Residues Asp-356, Glu-360, Phe-388–Ser-395, and Lys-407 contribute to the ATP site. Mg(2+) is bound by residues Asp-530 and Asp-534. 3 consecutive transmembrane segments (helical) span residues Phe-600–Met-620, Ala-628–Met-648, and Gly-672–Ile-692.

It belongs to the cation transport ATPase (P-type) (TC 3.A.3) family. Type IA subfamily. As to quaternary structure, the system is composed of three essential subunits: KdpA, KdpB and KdpC.

The protein resides in the cell membrane. It carries out the reaction K(+)(out) + ATP + H2O = K(+)(in) + ADP + phosphate + H(+). Part of the high-affinity ATP-driven potassium transport (or Kdp) system, which catalyzes the hydrolysis of ATP coupled with the electrogenic transport of potassium into the cytoplasm. This subunit is responsible for energy coupling to the transport system and for the release of the potassium ions to the cytoplasm. The polypeptide is Potassium-transporting ATPase ATP-binding subunit (Bacillus thuringiensis (strain Al Hakam)).